Here is a 441-residue protein sequence, read N- to C-terminus: UDP-N-acetylmuramoylalanine--D-glutamate ligase (441 aa).

Residue 112 to 118 (GTNGKTT) coordinates ATP.

The protein belongs to the MurCDEF family.

It localises to the cytoplasm. The enzyme catalyses UDP-N-acetyl-alpha-D-muramoyl-L-alanine + D-glutamate + ATP = UDP-N-acetyl-alpha-D-muramoyl-L-alanyl-D-glutamate + ADP + phosphate + H(+). Its pathway is cell wall biogenesis; peptidoglycan biosynthesis. Its function is as follows. Cell wall formation. Catalyzes the addition of glutamate to the nucleotide precursor UDP-N-acetylmuramoyl-L-alanine (UMA). This chain is UDP-N-acetylmuramoylalanine--D-glutamate ligase, found in Gloeobacter violaceus (strain ATCC 29082 / PCC 7421).